Here is a 107-residue protein sequence, read N- to C-terminus: UPF0060 membrane protein RPD_3084 (107 aa).

A run of 4 helical transmembrane segments spans residues 5-25, 31-51, 59-79, and 85-105; these read IIYV…WGWL, VWWL…LTLV, AYAS…WSVE, and RWDV…LWGP.

The protein belongs to the UPF0060 family.

It is found in the cell inner membrane. The sequence is that of UPF0060 membrane protein RPD_3084 from Rhodopseudomonas palustris (strain BisB5).